We begin with the raw amino-acid sequence, 537 residues long: [Pyruvate dehydrogenase [acetyl-transferring]]-phosphatase 1, mitochondrial (537 aa).

The N-terminal 71 residues, 1-71 (MPAPTQLFFP…WWQYTQGRRY (71 aa)), are a transit peptide targeting the mitochondrion. In terms of domain architecture, PPM-type phosphatase spans 109 to 525 (ILGFDSNQLP…DDITIIVVQF (417 aa)). Mn(2+)-binding residues include Asp-144 and Gly-145. N6-acetyllysine is present on Lys-202. Mn(2+) contacts are provided by Asp-418 and Asp-516.

Belongs to the PP2C family. Heterodimer of a catalytic (PDP1) and a regulatory (PDPR) subunit. Mn(2+) is required as a cofactor. Mg(2+) serves as cofactor.

The protein resides in the mitochondrion. It catalyses the reaction O-phospho-L-seryl-[pyruvate dehydrogenase E1 alpha subunit] + H2O = L-seryl-[pyruvate dehydrogenase E1 alpha subunit] + phosphate. With respect to regulation, magnesium-dependent and calcium-stimulated. PDP1 activity strongly depends on its Ca(2+)-dependent binding to the lipoyl domain of E2 subunit of component of the pyruvate dehydrogenase complex. Mitochondrial enzyme that catalyzes the dephosphorylation and concomitant reactivation of the alpha subunit of the E1 component of the pyruvate dehydrogenase complex (PDC), thereby stimulating the conversion of pyruvate into acetyl-CoA. In Homo sapiens (Human), this protein is [Pyruvate dehydrogenase [acetyl-transferring]]-phosphatase 1, mitochondrial.